A 772-amino-acid polypeptide reads, in one-letter code: Lon protease (772 aa).

Positions 6–200 (YPTLPLKNTV…LMHRYLNHEV (195 aa)) constitute a Lon N-terminal domain. 352–359 (GPPGVGKT) contacts ATP. The region spanning 588 to 769 (QLAPGVAAGL…EEVLAEAIPD (182 aa)) is the Lon proteolytic domain. Catalysis depends on residues Ser-675 and Lys-718.

It belongs to the peptidase S16 family. In terms of assembly, homohexamer. Organized in a ring with a central cavity.

Its subcellular location is the cytoplasm. It carries out the reaction Hydrolysis of proteins in presence of ATP.. ATP-dependent serine protease that mediates the selective degradation of mutant and abnormal proteins as well as certain short-lived regulatory proteins. Required for cellular homeostasis and for survival from DNA damage and developmental changes induced by stress. Degrades polypeptides processively to yield small peptide fragments that are 5 to 10 amino acids long. Binds to DNA in a double-stranded, site-specific manner. This chain is Lon protease, found in Nitrosococcus oceani (strain ATCC 19707 / BCRC 17464 / JCM 30415 / NCIMB 11848 / C-107).